Consider the following 115-residue polypeptide: Ribonuclease P protein component (115 aa).

It belongs to the RnpA family. Consists of a catalytic RNA component (M1 or rnpB) and a protein subunit.

It carries out the reaction Endonucleolytic cleavage of RNA, removing 5'-extranucleotides from tRNA precursor.. In terms of biological role, RNaseP catalyzes the removal of the 5'-leader sequence from pre-tRNA to produce the mature 5'-terminus. It can also cleave other RNA substrates such as 4.5S RNA. The protein component plays an auxiliary but essential role in vivo by binding to the 5'-leader sequence and broadening the substrate specificity of the ribozyme. The sequence is that of Ribonuclease P protein component from Baumannia cicadellinicola subsp. Homalodisca coagulata.